Here is a 102-residue protein sequence, read N- to C-terminus: Large ribosomal subunit protein bL21 (102 aa).

Belongs to the bacterial ribosomal protein bL21 family. As to quaternary structure, part of the 50S ribosomal subunit. Contacts protein L20.

In terms of biological role, this protein binds to 23S rRNA in the presence of protein L20. The polypeptide is Large ribosomal subunit protein bL21 (Pediococcus pentosaceus (strain ATCC 25745 / CCUG 21536 / LMG 10740 / 183-1w)).